The chain runs to 421 residues: UDP-N-acetylglucosamine 1-carboxyvinyltransferase (421 aa).

22–23 is a phosphoenolpyruvate binding site; the sequence is KN. Arg94 contacts UDP-N-acetyl-alpha-D-glucosamine. Cys118 acts as the Proton donor in catalysis. Cys118 carries the 2-(S-cysteinyl)pyruvic acid O-phosphothioketal modification. UDP-N-acetyl-alpha-D-glucosamine-binding positions include 163-166, Asp308, and Ile330; that span reads KVSV.

The protein belongs to the EPSP synthase family. MurA subfamily.

The protein resides in the cytoplasm. It catalyses the reaction phosphoenolpyruvate + UDP-N-acetyl-alpha-D-glucosamine = UDP-N-acetyl-3-O-(1-carboxyvinyl)-alpha-D-glucosamine + phosphate. The protein operates within cell wall biogenesis; peptidoglycan biosynthesis. Functionally, cell wall formation. Adds enolpyruvyl to UDP-N-acetylglucosamine. The protein is UDP-N-acetylglucosamine 1-carboxyvinyltransferase of Orientia tsutsugamushi (strain Boryong) (Rickettsia tsutsugamushi).